We begin with the raw amino-acid sequence, 348 residues long: Mycothiol acetyltransferase (348 aa).

N-acetyltransferase domains follow at residues 12–156 and 169–330; these read TSMR…VDVT and VAVR…HGTP. Position 44 (glutamate 44) interacts with 1D-myo-inositol 2-(L-cysteinylamino)-2-deoxy-alpha-D-glucopyranoside. 91-93 serves as a coordination point for acetyl-CoA; sequence LVV. Glutamate 196, lysine 235, and glutamate 253 together coordinate 1D-myo-inositol 2-(L-cysteinylamino)-2-deoxy-alpha-D-glucopyranoside. Residues 257–259 and 264–270 each bind acetyl-CoA; these read VGV and QGLGMGR. Residue tyrosine 291 coordinates 1D-myo-inositol 2-(L-cysteinylamino)-2-deoxy-alpha-D-glucopyranoside. Residue 296–301 coordinates acetyl-CoA; that stretch reads NTVAVH. The disordered stretch occupies residues 320-348; that stretch reads PPAGSPAHGTPLVRVTDTPSSPGDATMGS. Polar residues predominate over residues 336-348; the sequence is DTPSSPGDATMGS.

Belongs to the acetyltransferase family. MshD subfamily. In terms of assembly, monomer.

It catalyses the reaction 1D-myo-inositol 2-(L-cysteinylamino)-2-deoxy-alpha-D-glucopyranoside + acetyl-CoA = mycothiol + CoA + H(+). Catalyzes the transfer of acetyl from acetyl-CoA to desacetylmycothiol (Cys-GlcN-Ins) to form mycothiol. This Cellulomonas flavigena (strain ATCC 482 / DSM 20109 / BCRC 11376 / JCM 18109 / NBRC 3775 / NCIMB 8073 / NRS 134) protein is Mycothiol acetyltransferase.